A 345-amino-acid polypeptide reads, in one-letter code: Biotin synthase (345 aa).

The Radical SAM core domain occupies 49–276 (NQVQMSTLLS…ASFVRLSAGR (228 aa)). 3 residues coordinate [4Fe-4S] cluster: Cys-64, Cys-68, and Cys-71. Residues Cys-108, Cys-139, Cys-199, and Arg-271 each coordinate [2Fe-2S] cluster.

The protein belongs to the radical SAM superfamily. Biotin synthase family. Homodimer. The cofactor is [4Fe-4S] cluster. It depends on [2Fe-2S] cluster as a cofactor.

It catalyses the reaction (4R,5S)-dethiobiotin + (sulfur carrier)-SH + 2 reduced [2Fe-2S]-[ferredoxin] + 2 S-adenosyl-L-methionine = (sulfur carrier)-H + biotin + 2 5'-deoxyadenosine + 2 L-methionine + 2 oxidized [2Fe-2S]-[ferredoxin]. It functions in the pathway cofactor biosynthesis; biotin biosynthesis; biotin from 7,8-diaminononanoate: step 2/2. In terms of biological role, catalyzes the conversion of dethiobiotin (DTB) to biotin by the insertion of a sulfur atom into dethiobiotin via a radical-based mechanism. The protein is Biotin synthase of Nitrosococcus oceani (strain ATCC 19707 / BCRC 17464 / JCM 30415 / NCIMB 11848 / C-107).